A 921-amino-acid polypeptide reads, in one-letter code: Inter-alpha-trypsin inhibitor heavy chain H4 (921 aa).

The N-terminal stretch at 1–27 (MKTLSPTGYGLLLVLPLLLAVLQSTTA) is a signal peptide. The 119-residue stretch at 28–146 (HKNDINIYSL…KVTFELVYEE (119 aa)) folds into the VIT domain. Asn-80, Asn-205, and Asn-242 each carry an N-linked (GlcNAc...) asparagine glycan. The 159-residue stretch at 270–428 (PKNVIFVIDT…YAFLEKMALE (159 aa)) folds into the VWFA domain. Residues Asn-513 and Asn-577 are each glycosylated (N-linked (GlcNAc...) asparagine). The segment at 591-646 (KPEGQEQSQVAEKPVENGNRQGNTHSGHSSFQFHSVGDRTSRLTGGSSVDPVFSHR) is disordered. Positions 608-623 (GNRQGNTHSGHSSFQF) are enriched in polar residues. An O-linked (GalNAc...) threonine glycan is attached at Thr-712. A disulfide bridge links Cys-738 with Cys-916.

The protein belongs to the ITIH family. In terms of assembly, interacts (via C-terminus) with DNAJC1 (via SANT 2 domain). Post-translationally, appears to be both N- and O-glycosylated. In terms of processing, cleaved by plasma kallikrein to yield 55- and 25-kDa fragments. As to expression, liver specific.

Its subcellular location is the secreted. Its function is as follows. Type II acute-phase protein (APP) involved in inflammatory responses to trauma. May also play a role in liver development or regeneration. In Sus scrofa (Pig), this protein is Inter-alpha-trypsin inhibitor heavy chain H4 (ITIH4).